We begin with the raw amino-acid sequence, 118 residues long: Holo-[acyl-carrier-protein] synthase (118 aa).

Positions 8 and 60 each coordinate Mg(2+).

This sequence belongs to the P-Pant transferase superfamily. AcpS family. Mg(2+) is required as a cofactor.

The protein resides in the cytoplasm. The catalysed reaction is apo-[ACP] + CoA = holo-[ACP] + adenosine 3',5'-bisphosphate + H(+). Functionally, transfers the 4'-phosphopantetheine moiety from coenzyme A to a Ser of acyl-carrier-protein. This is Holo-[acyl-carrier-protein] synthase from Wolbachia sp. subsp. Drosophila simulans (strain wRi).